The primary structure comprises 423 residues: Zinc finger and BTB domain-containing protein 6 (423 aa).

A BTB domain is found at 33–97 (CDVSIYINDT…CYTGALEVKR (65 aa)). A Phosphoserine modification is found at Ser201. C2H2-type zinc fingers lie at residues 300–322 (HQCP…LKMH), 325–347 (FLCL…IRGH), 353–375 (FQCT…LNIH), and 381–404 (YKCH…TSVH).

The protein localises to the nucleus. May be involved in transcriptional regulation. This Mus musculus (Mouse) protein is Zinc finger and BTB domain-containing protein 6 (Zbtb6).